We begin with the raw amino-acid sequence, 208 residues long: Holliday junction resolvase RecU (208 aa).

Residues 1–25 are disordered; it reads MNYPNGKPFNRNKTKVGRTNDHKSS. Residues T87, D89, E102, and Q121 each coordinate Mg(2+).

The protein belongs to the RecU family. Mg(2+) serves as cofactor.

It localises to the cytoplasm. The enzyme catalyses Endonucleolytic cleavage at a junction such as a reciprocal single-stranded crossover between two homologous DNA duplexes (Holliday junction).. Functionally, endonuclease that resolves Holliday junction intermediates in genetic recombination. Cleaves mobile four-strand junctions by introducing symmetrical nicks in paired strands. Promotes annealing of linear ssDNA with homologous dsDNA. Required for DNA repair, homologous recombination and chromosome segregation. The protein is Holliday junction resolvase RecU of Staphylococcus carnosus (strain TM300).